Consider the following 135-residue polypeptide: Rheacalcin-1 (135 aa).

Disulfide bonds link Cys-6-Cys-17, Cys-34-Cys-131, and Cys-106-Cys-123. In terms of domain architecture, C-type lectin spans 13 to 132 (FRGNCYGYFR…CSERNAFICK (120 aa)).

It localises to the secreted. The protein localises to the extracellular space. It is found in the extracellular matrix. In Rhea americana (Greater rhea), this protein is Rheacalcin-1.